Consider the following 248-residue polypeptide: NLP effector protein Pc121494 (248 aa).

Positions 1-19 (MKFIAVLIAAIASLSAVQA) are cleaved as a signal peptide. The Hepta-peptide GHRHDWE motif signature appears at 124–130 (GHRNGWE). An N-linked (GlcNAc...) asparagine glycan is attached at Asn143.

This sequence belongs to the Necrosis inducing protein (NPP1) family.

It localises to the secreted. Secreted effector that contributes strongly to virulence during infection by P.capsici. The polypeptide is NLP effector protein Pc121494 (Phytophthora capsici).